The following is a 95-amino-acid chain: Small ribosomal subunit protein bS16 (95 aa).

It belongs to the bacterial ribosomal protein bS16 family.

The sequence is that of Small ribosomal subunit protein bS16 from Mycoplasma genitalium (strain ATCC 33530 / DSM 19775 / NCTC 10195 / G37) (Mycoplasmoides genitalium).